The chain runs to 1290 residues: DNA-directed RNA polymerase subunit beta' (1290 aa).

Residues Cys68, Cys70, Cys83, and Cys86 each coordinate Zn(2+). Residues Asp530, Asp532, and Asp534 each coordinate Mg(2+). Residues Cys909, Cys985, Cys992, and Cys995 each contribute to the Zn(2+) site.

Belongs to the RNA polymerase beta' chain family. The RNAP catalytic core consists of 2 alpha, 1 beta, 1 beta' and 1 omega subunit. When a sigma factor is associated with the core the holoenzyme is formed, which can initiate transcription. Requires Mg(2+) as cofactor. The cofactor is Zn(2+).

It catalyses the reaction RNA(n) + a ribonucleoside 5'-triphosphate = RNA(n+1) + diphosphate. Its function is as follows. DNA-dependent RNA polymerase catalyzes the transcription of DNA into RNA using the four ribonucleoside triphosphates as substrates. The sequence is that of DNA-directed RNA polymerase subunit beta' from Mycoplasma pneumoniae (strain ATCC 29342 / M129 / Subtype 1) (Mycoplasmoides pneumoniae).